The following is a 512-amino-acid chain: Probable capsid protein 4 (512 aa).

The protein belongs to the NCLDV major capsid protein family.

It is found in the virion. The chain is Probable capsid protein 4 from Acanthamoeba polyphaga mimivirus (APMV).